The sequence spans 680 residues: DNA-directed RNA polymerase subunit beta' (680 aa).

C69, C71, C87, and C90 together coordinate Zn(2+). Residues D489, D491, and D493 each contribute to the Mg(2+) site.

Belongs to the RNA polymerase beta' chain family. RpoC1 subfamily. In plastids the minimal PEP RNA polymerase catalytic core is composed of four subunits: alpha, beta, beta', and beta''. When a (nuclear-encoded) sigma factor is associated with the core the holoenzyme is formed, which can initiate transcription. The cofactor is Mg(2+). It depends on Zn(2+) as a cofactor.

It localises to the plastid. The protein resides in the chloroplast. It carries out the reaction RNA(n) + a ribonucleoside 5'-triphosphate = RNA(n+1) + diphosphate. Its function is as follows. DNA-dependent RNA polymerase catalyzes the transcription of DNA into RNA using the four ribonucleoside triphosphates as substrates. The protein is DNA-directed RNA polymerase subunit beta' of Aethionema grandiflorum (Persian stone-cress).